A 504-amino-acid chain; its full sequence is Maturase K (504 aa).

Belongs to the intron maturase 2 family. MatK subfamily.

It is found in the plastid. The protein resides in the chloroplast. Its function is as follows. Usually encoded in the trnK tRNA gene intron. Probably assists in splicing its own and other chloroplast group II introns. The sequence is that of Maturase K from Amaranthus caudatus (Love-lies-bleeding).